The sequence spans 173 residues: Small ribosomal subunit protein uS5 (173 aa).

Residues 18–81 (LREKMIAVNR…EQARRGMFKV (64 aa)) enclose the S5 DRBM domain.

It belongs to the universal ribosomal protein uS5 family. In terms of assembly, part of the 30S ribosomal subunit. Contacts proteins S4 and S8.

In terms of biological role, with S4 and S12 plays an important role in translational accuracy. Functionally, located at the back of the 30S subunit body where it stabilizes the conformation of the head with respect to the body. This Bordetella avium (strain 197N) protein is Small ribosomal subunit protein uS5.